The sequence spans 559 residues: Paxillin (559 aa).

An LD motif 1 motif is present at residues D3–T15. The tract at residues H17 to G139 is disordered. Y31 carries the phosphotyrosine modification. Pro residues predominate over residues V45–S54. The segment covering Q79–S98 has biased composition (low complexity). The residue at position 118 (Y118) is a Phosphotyrosine; by FAK1. The segment covering P121 to S137 has biased composition (polar residues). The LD motif 2 signature appears at E144 to Q156. Disordered regions lie at residues N158–D213 and L225–S262. Positions S217–V229 match the LD motif 3 motif. Residues T237–S262 show a composition bias toward polar residues. A required for binding to PARVA and ILK region spans residues A263–Q282. 2 consecutive short sequence motifs (LD motif) follow at residues E266–F277 and Q301–L313. The tract at residues A281–Q301 is disordered. 4 consecutive LIM zinc-binding domains span residues C326 to D376, C385 to D435, C444 to H494, and C503 to C553.

As to quaternary structure, interacts (via LD motif 4) with PARVA/PARVIN and ILK. Phosphorylated on tyrosine residues during integrin-mediated cell adhesion, embryonic development, fibroblast transformation and following stimulation of cells by mitogens.

The protein resides in the cytoplasm. It is found in the cytoskeleton. The protein localises to the cell junction. It localises to the focal adhesion. Its subcellular location is the cell cortex. Its function is as follows. Cytoskeletal protein involved in actin-membrane attachment at sites of cell adhesion to the extracellular matrix (focal adhesion). Binds in vitro to vinculin as well as to the SH3 domain of c-SRC and, when tyrosine phosphorylated, to the SH2 domain of v-CRK. The protein is Paxillin (PXN) of Gallus gallus (Chicken).